The chain runs to 378 residues: Transcription factor YY2 (378 aa).

The tract at residues 39-113 (LETSVGQTIE…DNLLFSPEFG (75 aa)) is mediates transcriptional activation. Positions 243-378 (EFTSMRPKKP…LTHVKNKNDQ (136 aa)) are mediates transcriptional repression. 4 C2H2-type zinc fingers span residues 260–284 (IACS…LHIH), 289–311 (HVCA…QLVH), 317–341 (YQCT…VRIH), and 347–371 (FVCP…ILTH).

It belongs to the YY transcription factor family. In terms of tissue distribution, weakly expressed by neuronal and glial cells in the cerebral cortex. Expressed by Purkinje cells and in the granular layers of the cerebellum. Expressed in all layers of spermatocytes in testis but not detected in sperm cells.

The protein localises to the nucleus. In terms of biological role, functions as a multifunctional transcription factor that may exhibit positive and negative control on a large number of genes. May antagonize YY1 and function in development and differentiation. The sequence is that of Transcription factor YY2 (Yy2) from Mus musculus (Mouse).